The primary structure comprises 512 residues: Perphorin-1 (512 aa).

An N-terminal signal peptide occupies residues 1–18 (MMRKALLALCVATAFAVA). N-linked (GlcNAc...) asparagine glycans are attached at residues N49, N96, N118, N378, N381, N403, and N476.

It is found in the secreted. Its subcellular location is the extracellular space. The protein localises to the extracellular matrix. Its function is as follows. May be involved in conversion of asexual males and females to the sexual pathway. This chain is Perphorin-1, found in Volvox carteri (Green alga).